We begin with the raw amino-acid sequence, 1171 residues long: 7,8-linoleate diol synthase (1171 aa).

Over residues 1–22 the composition is skewed to low complexity; sequence MASSSSSGSSTRSSSPSDPPSS. Residues 1–56 form a disordered region; it reads MASSSSSGSSTRSSSPSDPPSSFFQKLGAFLGLFSKPQPPRPDYPHAPGNSAREEQ. Positions 114 to 457 are fatty acid alpha-dioxygenase; sequence TDGLITGLWE…DGSFEDEGLI (344 aa). Histidine 213 lines the heme b pocket. 5 residues coordinate Ca(2+): aspartate 214, serine 229, tyrosine 231, aspartate 233, and serine 235. Tyrosine 385 is a catalytic residue. Heme b is bound at residue histidine 388. The tract at residues 675–1171 is epoxy alcohol synthase; the sequence is KILNNQKDFK…PMNMKIRWDD (497 aa). The disordered stretch occupies residues 873–900; it reads GLANGGANGHANGNANGHTNGNGIHQNG. Low complexity predominate over residues 881-895; it reads GHANGNANGHTNGNG. Residue cysteine 1089 coordinates heme.

In the N-terminal section; belongs to the peroxidase family. This sequence in the C-terminal section; belongs to the cytochrome P450 family. Homotetramer. The cofactor is heme b. Requires Ca(2+) as cofactor. It depends on heme as a cofactor.

It catalyses the reaction (9Z,12Z)-octadecadienoate + O2 = (8R,9Z,12Z)-8-hydroperoxyoctadeca-9,12-dienoate. The catalysed reaction is (8R,9Z,12Z)-8-hydroperoxyoctadeca-9,12-dienoate = (7S,8S,9Z,12Z)-7,8-dihydroxyoctadeca-9,12-dienoate. 7,8-linoleate diol synthase is a bifunctional enzyme that converts linoleic acid (18:2n-6) into 8-hydroperoxy-8(E),12(Z)-octadecadienoic acid (8-HPODE) and then catalyzes the isomerization of the resulting hydroperoxide to 7,8-dihydroxy-9(Z),12(Z)-octadecadienoic acid (7,8-DiHODE). This Pyricularia oryzae (strain 70-15 / ATCC MYA-4617 / FGSC 8958) (Rice blast fungus) protein is 7,8-linoleate diol synthase.